We begin with the raw amino-acid sequence, 270 residues long: Probable aquaporin NIP-type (270 aa).

A run of 2 helical transmembrane segments spans residues 45–65 (LIAE…SVAV) and 72–92 (VTFP…VYTV). An NPA 1 motif is present at residues 101–103 (NPA). The next 3 membrane-spanning stretches (helical) occupy residues 121–141 (LYII…ALLF), 160–180 (SLAI…GVAT), and 188–208 (VAGI…GPIS). The short motif at 213–215 (NPA) is the NPA 2 element. The helical transmembrane segment at 231–251 (WVYVVGPIIGTLAGAFVYNLI) threads the bilayer.

Belongs to the MIP/aquaporin (TC 1.A.8) family. NIP (TC 1.A.8.12) subfamily. As to expression, pollen specific.

Its subcellular location is the membrane. In terms of biological role, aquaporins facilitate the transport of water and small neutral solutes across cell membranes. This is Probable aquaporin NIP-type from Nicotiana alata (Winged tobacco).